A 124-amino-acid chain; its full sequence is Protein MGF 110-4L (124 aa).

The N-terminal stretch at 1-28 (MLVIFLGILGLLANQVLGLPTQAGGHLR) is a signal peptide. An N-linked (GlcNAc...) asparagine; by host glycan is attached at N64. The Prevents secretion from ER signature appears at 121 to 124 (KEDL).

The protein belongs to the asfivirus MGF 110 family.

It localises to the virion. The protein localises to the host endoplasmic reticulum-Golgi intermediate compartment. Functionally, causes the redistribution of lumenal ER protein to an enlarged ERGIC compartment. The protein is Protein MGF 110-4L of African swine fever virus (strain Badajoz 1971 Vero-adapted) (Ba71V).